The primary structure comprises 321 residues: tRNA-dihydrouridine synthase B (321 aa).

FMN-binding positions include 16–18 (PMA) and Gln-70. Cys-100 functions as the Proton donor in the catalytic mechanism. Residues Lys-139, 200 to 202 (NGD), and 224 to 225 (GR) each bind FMN.

Belongs to the Dus family. DusB subfamily. The cofactor is FMN.

The catalysed reaction is a 5,6-dihydrouridine in tRNA + NAD(+) = a uridine in tRNA + NADH + H(+). It catalyses the reaction a 5,6-dihydrouridine in tRNA + NADP(+) = a uridine in tRNA + NADPH + H(+). Its function is as follows. Catalyzes the synthesis of 5,6-dihydrouridine (D), a modified base found in the D-loop of most tRNAs, via the reduction of the C5-C6 double bond in target uridines. The protein is tRNA-dihydrouridine synthase B of Shigella flexneri.